We begin with the raw amino-acid sequence, 534 residues long: Chaperonin GroEL, chloroplastic (534 aa).

ATP-binding positions include 29-32 (TLGP), 86-90 (DGTTT), Gly-414, and Asp-496.

It belongs to the chaperonin (HSP60) family. In terms of assembly, forms a cylinder of 14 subunits composed of two heptameric rings stacked back-to-back. Interacts with the co-chaperonin GroES.

Its subcellular location is the plastid. The protein localises to the chloroplast. The enzyme catalyses ATP + H2O + a folded polypeptide = ADP + phosphate + an unfolded polypeptide.. In terms of biological role, together with its co-chaperonin GroES, plays an essential role in assisting protein folding. The GroEL-GroES system forms a nano-cage that allows encapsulation of the non-native substrate proteins and provides a physical environment optimized to promote and accelerate protein folding. This chain is Chaperonin GroEL, chloroplastic, found in Galdieria sulphuraria (Red alga).